Reading from the N-terminus, the 282-residue chain is 4-deoxy-L-threo-5-hexosulose-uronate ketol-isomerase 2 (282 aa).

His200, His202, Glu207, and His249 together coordinate Zn(2+).

It belongs to the KduI family. Zn(2+) is required as a cofactor.

The enzyme catalyses 5-dehydro-4-deoxy-D-glucuronate = 3-deoxy-D-glycero-2,5-hexodiulosonate. It participates in glycan metabolism; pectin degradation; 2-dehydro-3-deoxy-D-gluconate from pectin: step 4/5. Catalyzes the isomerization of 5-dehydro-4-deoxy-D-glucuronate to 3-deoxy-D-glycero-2,5-hexodiulosonate. The sequence is that of 4-deoxy-L-threo-5-hexosulose-uronate ketol-isomerase 2 (kduI2) from Rhizobium meliloti (strain 1021) (Ensifer meliloti).